Here is a 387-residue protein sequence, read N- to C-terminus: MEAILKIGDIVENKYQIEKLLNRGGMDSYLFLAKNLNLKNYGPVQKKQYGHLVLKVVQKNPKINENNWKKFLDEMVTTTRVHHSNLVKSFDVVNPFLKIVRGNKTIALNQIVMIAMEYVDGPSLRQLLNRKGYFSVSEVVYYFTKIVKAIDYLHSFKHQIIHRDLKPENILFTSDLTDIKLLDFGIASTVVKVAEKTEVLTDENSLFGTVSYMIPDVLESTVNKAGKKVRKPPNAQYDIYSLGIILFEMLVGRVPFNKSINPNKERETIQKARNFDLPLMQATRSDIPNSLENIAFRCTAVKRENNKWLYSSTKELLEDLANWENEQAMIKPANERVLEGQVEIREMMLEKPLAWYFKTWALSIFTIVFIGLIIAAIVLLLIFNARF.

A Protein kinase domain is found at 15 to 344; sequence YQIEKLLNRG…ERVLEGQVEI (330 aa). Residues 21 to 29 and Lys55 contribute to the ATP site; that span reads LNRGGMDSY. Asp164 (proton acceptor) is an active-site residue. Transmembrane regions (helical) follow at residues 232–252 and 363–383; these read PPNA…MLVG and SIFT…LLIF.

It belongs to the protein kinase superfamily. Ser/Thr protein kinase family.

Its subcellular location is the cell membrane. The catalysed reaction is L-seryl-[protein] + ATP = O-phospho-L-seryl-[protein] + ADP + H(+). It catalyses the reaction L-threonyl-[protein] + ATP = O-phospho-L-threonyl-[protein] + ADP + H(+). The polypeptide is Putative serine/threonine-protein kinase (Mycoplasma genitalium (strain ATCC 33530 / DSM 19775 / NCTC 10195 / G37) (Mycoplasmoides genitalium)).